A 1295-amino-acid polypeptide reads, in one-letter code: DNA-directed RNA polymerase subunit beta' (1295 aa).

Zn(2+)-binding residues include Cys-60, Cys-62, Cys-75, and Cys-78. Residues Asp-516, Asp-518, and Asp-520 each contribute to the Mg(2+) site. Positions 841, 914, 921, and 924 each coordinate Zn(2+).

Belongs to the RNA polymerase beta' chain family. The RNAP catalytic core consists of 2 alpha, 1 beta, 1 beta' and 1 omega subunit. When a sigma factor is associated with the core the holoenzyme is formed, which can initiate transcription. Mg(2+) is required as a cofactor. Requires Zn(2+) as cofactor.

The enzyme catalyses RNA(n) + a ribonucleoside 5'-triphosphate = RNA(n+1) + diphosphate. DNA-dependent RNA polymerase catalyzes the transcription of DNA into RNA using the four ribonucleoside triphosphates as substrates. In Dehalococcoides mccartyi (strain CBDB1), this protein is DNA-directed RNA polymerase subunit beta'.